Here is an 81-residue protein sequence, read N- to C-terminus: RNA-binding protein KhpA (81 aa).

Residues 34–81 (KIALRLSVHKSDTGKVIGKQGRTAKAIRTAVFAAGVQSSKKVQFEIFD) form the KH domain.

It belongs to the KhpA RNA-binding protein family. In terms of assembly, forms a complex with KhpB.

The protein localises to the cytoplasm. Its function is as follows. A probable RNA chaperone. Forms a complex with KhpB which binds to cellular RNA and controls its expression. Plays a role in peptidoglycan (PG) homeostasis and cell length regulation. The sequence is that of RNA-binding protein KhpA from Bacillus subtilis (strain 168).